The following is a 309-amino-acid chain: Dihydroorotate dehydrogenase B (NAD(+)), catalytic subunit (309 aa).

FMN contacts are provided by residues S21 and 45-46 (KA). Substrate is bound by residues K45 and 69–73 (NAIGL). Positions 99 and 127 each coordinate FMN. N127 serves as a coordination point for substrate. The Nucleophile role is filled by C130. Residues K165 and I191 each coordinate FMN. 192–193 (NT) is a binding site for substrate. Residues G217, 243–244 (GG), and 265–266 (GT) contribute to the FMN site.

This sequence belongs to the dihydroorotate dehydrogenase family. Type 1 subfamily. In terms of assembly, heterotetramer of 2 PyrK and 2 PyrD type B subunits. FMN is required as a cofactor.

It is found in the cytoplasm. It catalyses the reaction (S)-dihydroorotate + NAD(+) = orotate + NADH + H(+). The protein operates within pyrimidine metabolism; UMP biosynthesis via de novo pathway; orotate from (S)-dihydroorotate (NAD(+) route): step 1/1. Catalyzes the conversion of dihydroorotate to orotate with NAD(+) as electron acceptor. The polypeptide is Dihydroorotate dehydrogenase B (NAD(+)), catalytic subunit (pyrD) (Bacillus cereus (strain AH187)).